The chain runs to 229 residues: 2,3-bisphosphoglycerate-dependent phosphoglycerate mutase 2 (229 aa).

Residues 8–15, 21–22, R60, 87–90, K98, 114–115, and 183–184 each bind substrate; these read RHGQSEWN, TG, ERHY, RR, and GN. H9 functions as the Tele-phosphohistidine intermediate in the catalytic mechanism. Residue E87 is the Proton donor/acceptor of the active site.

Belongs to the phosphoglycerate mutase family. BPG-dependent PGAM subfamily.

It carries out the reaction (2R)-2-phosphoglycerate = (2R)-3-phosphoglycerate. The protein operates within carbohydrate degradation; glycolysis; pyruvate from D-glyceraldehyde 3-phosphate: step 3/5. In terms of biological role, catalyzes the interconversion of 2-phosphoglycerate and 3-phosphoglycerate. The polypeptide is 2,3-bisphosphoglycerate-dependent phosphoglycerate mutase 2 (Latilactobacillus sakei subsp. sakei (strain 23K) (Lactobacillus sakei subsp. sakei)).